The following is a 468-amino-acid chain: MQYLPIFLNIRGQQCLVVGGGTVAVRKVALLRQAGAEVKVIAPKLHEQLQEWADKGKITAQQASFSETEIKSCYLVIAATDDSSLNEQVYHLATAQGVLVNVADCPRFCDFILPSIVDRSPVIVAVSSGGASPVLARLLRARLETLIPQAYGRLGQFAARYRSRIKQRITGIRARRIFWEKVLQGSIAERIFAGQEEEAEGALEAALEGGFVPEQGEVYLVGAGPGDPDLLTFRALRLMQQADVVFHDRLVSPEVLALVRREAERIYVGKKRSWHAVRQEEINMMLVRSAREGKRVLRLKGGDPFIFGRGGEEIATLAAENIPFQVVPGITAASGCASYAGIPLTHRDHAHACIFVTGQLKEGRLSLNWQALVQPQQTIVVYMGLSGLEILCQELIAHGMPAVTPAALVQQGTTSRQRVLTGTLATLPDIVQGEDIHAPTLVIIGGVVALYPQLAWFKVPDREPLDAR.

A precorrin-2 dehydrogenase /sirohydrochlorin ferrochelatase region spans residues M1 to L203. Residues T22–V23 and P43–K44 each bind NAD(+). Position 128 is a phosphoserine (S128). Positions G216–R468 are uroporphyrinogen-III C-methyltransferase. P225 is an S-adenosyl-L-methionine binding site. D248 (proton acceptor) is an active-site residue. The active-site Proton donor is the K270. S-adenosyl-L-methionine contacts are provided by residues G301 to D303, I306, T331 to A332, M383, and G412.

The protein in the N-terminal section; belongs to the precorrin-2 dehydrogenase / sirohydrochlorin ferrochelatase family. In the C-terminal section; belongs to the precorrin methyltransferase family.

It carries out the reaction uroporphyrinogen III + 2 S-adenosyl-L-methionine = precorrin-2 + 2 S-adenosyl-L-homocysteine + H(+). The catalysed reaction is precorrin-2 + NAD(+) = sirohydrochlorin + NADH + 2 H(+). The enzyme catalyses siroheme + 2 H(+) = sirohydrochlorin + Fe(2+). It functions in the pathway cofactor biosynthesis; adenosylcobalamin biosynthesis; precorrin-2 from uroporphyrinogen III: step 1/1. It participates in cofactor biosynthesis; adenosylcobalamin biosynthesis; sirohydrochlorin from precorrin-2: step 1/1. The protein operates within porphyrin-containing compound metabolism; siroheme biosynthesis; precorrin-2 from uroporphyrinogen III: step 1/1. Its pathway is porphyrin-containing compound metabolism; siroheme biosynthesis; siroheme from sirohydrochlorin: step 1/1. It functions in the pathway porphyrin-containing compound metabolism; siroheme biosynthesis; sirohydrochlorin from precorrin-2: step 1/1. Functionally, multifunctional enzyme that catalyzes the SAM-dependent methylations of uroporphyrinogen III at position C-2 and C-7 to form precorrin-2 via precorrin-1. Then it catalyzes the NAD-dependent ring dehydrogenation of precorrin-2 to yield sirohydrochlorin. Finally, it catalyzes the ferrochelation of sirohydrochlorin to yield siroheme. The protein is Siroheme synthase of Nitrosococcus oceani (strain ATCC 19707 / BCRC 17464 / JCM 30415 / NCIMB 11848 / C-107).